Consider the following 232-residue polypeptide: Imidazole glycerol phosphate synthase subunit HisF (232 aa).

Residues aspartate 11 and aspartate 130 contribute to the active site.

The protein belongs to the HisA/HisF family. Heterodimer of HisH and HisF.

It is found in the cytoplasm. The enzyme catalyses 5-[(5-phospho-1-deoxy-D-ribulos-1-ylimino)methylamino]-1-(5-phospho-beta-D-ribosyl)imidazole-4-carboxamide + L-glutamine = D-erythro-1-(imidazol-4-yl)glycerol 3-phosphate + 5-amino-1-(5-phospho-beta-D-ribosyl)imidazole-4-carboxamide + L-glutamate + H(+). The protein operates within amino-acid biosynthesis; L-histidine biosynthesis; L-histidine from 5-phospho-alpha-D-ribose 1-diphosphate: step 5/9. Functionally, IGPS catalyzes the conversion of PRFAR and glutamine to IGP, AICAR and glutamate. The HisF subunit catalyzes the cyclization activity that produces IGP and AICAR from PRFAR using the ammonia provided by the HisH subunit. This is Imidazole glycerol phosphate synthase subunit HisF from Listeria monocytogenes serotype 4a (strain HCC23).